We begin with the raw amino-acid sequence, 290 residues long: Diaminopimelate epimerase (290 aa).

N17, Q49, and N69 together coordinate substrate. C78 acts as the Proton donor in catalysis. Substrate is bound by residues 79–80 (GN), N165, N198, and 216–217 (ER). Residue C225 is the Proton acceptor of the active site. 226–227 (GS) provides a ligand contact to substrate.

Belongs to the diaminopimelate epimerase family. As to quaternary structure, homodimer.

It is found in the cytoplasm. The catalysed reaction is (2S,6S)-2,6-diaminopimelate = meso-2,6-diaminopimelate. The protein operates within amino-acid biosynthesis; L-lysine biosynthesis via DAP pathway; DL-2,6-diaminopimelate from LL-2,6-diaminopimelate: step 1/1. Functionally, catalyzes the stereoinversion of LL-2,6-diaminopimelate (L,L-DAP) to meso-diaminopimelate (meso-DAP), a precursor of L-lysine and an essential component of the bacterial peptidoglycan. This is Diaminopimelate epimerase from Methylocella silvestris (strain DSM 15510 / CIP 108128 / LMG 27833 / NCIMB 13906 / BL2).